The sequence spans 701 residues: Transcription factor PDR8 (701 aa).

The segment at 1–22 (MDGSHFPMKSTTGEPVSSGKKG) is disordered. The segment at residues 31–59 (CAFCRKRKLKCSQARPMCQQCVIRKLPQC) is a DNA-binding region (zn(2)-C6 fungal-type).

It localises to the cytoplasm. The protein resides in the nucleus. Up-regulates the transcription of the genes for ATP-binding cassette (ABC) transporters YOR1 and PDR15, for major facilitator superfamily transporter AZR1, for pleiotropic drug resistance SNG1, for alpha-glucosidase YJL216C and for YLL056C. The sequence is that of Transcription factor PDR8 (PDR8) from Saccharomyces cerevisiae (strain ATCC 204508 / S288c) (Baker's yeast).